We begin with the raw amino-acid sequence, 203 residues long: High frequency lysogenization protein HflD homolog (203 aa).

It belongs to the HflD family.

It localises to the cytoplasm. Its subcellular location is the cell inner membrane. The sequence is that of High frequency lysogenization protein HflD homolog from Histophilus somni (strain 2336) (Haemophilus somnus).